The chain runs to 180 residues: UPF0227 protein YpsIP31758_1593 (180 aa).

The protein belongs to the UPF0227 family.

This is UPF0227 protein YpsIP31758_1593 from Yersinia pseudotuberculosis serotype O:1b (strain IP 31758).